We begin with the raw amino-acid sequence, 429 residues long: Aspartate--tRNA(Asp/Asn) ligase (429 aa).

L-aspartate is bound at residue E167. The interval 189 to 192 (QLYK) is aspartate. Residue R210 coordinates L-aspartate. ATP is bound by residues 210–212 (RAE) and E352. E352 and S355 together coordinate Mg(2+). Residues S355 and R359 each coordinate L-aspartate. An ATP-binding site is contributed by 400–403 (GLAR).

Belongs to the class-II aminoacyl-tRNA synthetase family. Type 2 subfamily. Homodimer. Mg(2+) serves as cofactor.

It is found in the cytoplasm. It catalyses the reaction tRNA(Asx) + L-aspartate + ATP = L-aspartyl-tRNA(Asx) + AMP + diphosphate. Its function is as follows. Aspartyl-tRNA synthetase with relaxed tRNA specificity since it is able to aspartylate not only its cognate tRNA(Asp) but also tRNA(Asn). Reaction proceeds in two steps: L-aspartate is first activated by ATP to form Asp-AMP and then transferred to the acceptor end of tRNA(Asp/Asn). In Sulfurisphaera tokodaii (strain DSM 16993 / JCM 10545 / NBRC 100140 / 7) (Sulfolobus tokodaii), this protein is Aspartate--tRNA(Asp/Asn) ligase.